A 238-amino-acid polypeptide reads, in one-letter code: Flagellar L-ring protein (238 aa).

The signal sequence occupies residues 1-16; sequence MNKAILAVAMVLLLAG. The N-palmitoyl cysteine moiety is linked to residue Cys17. The S-diacylglycerol cysteine moiety is linked to residue Cys17.

The protein belongs to the FlgH family. As to quaternary structure, the basal body constitutes a major portion of the flagellar organelle and consists of four rings (L,P,S, and M) mounted on a central rod.

Its subcellular location is the cell outer membrane. It is found in the bacterial flagellum basal body. In terms of biological role, assembles around the rod to form the L-ring and probably protects the motor/basal body from shearing forces during rotation. The sequence is that of Flagellar L-ring protein from Brucella abortus (strain 2308).